A 51-amino-acid polypeptide reads, in one-letter code: Large ribosomal subunit protein bL33 (51 aa).

Residues 1–20 (MRDKIRLNSSAGTGHFYTTD) form a disordered region.

Belongs to the bacterial ribosomal protein bL33 family.

This chain is Large ribosomal subunit protein bL33, found in Psychromonas ingrahamii (strain DSM 17664 / CCUG 51855 / 37).